A 587-amino-acid chain; its full sequence is Glutathione hydrolase proenzyme (587 aa).

An N-terminal signal peptide occupies residues methionine 1 to alanine 28. The propeptide occupies lysine 29–tyrosine 35. Residue arginine 113 coordinates L-glutamate. Threonine 403 acts as the Nucleophile in catalysis. L-glutamate contacts are provided by residues threonine 421, glutamate 423, glutamate 442, aspartate 445, serine 464–serine 465, and glycine 485–glycine 486.

The protein belongs to the gamma-glutamyltransferase family. In terms of assembly, this enzyme consists of two polypeptide chains, which are synthesized in precursor form from a single polypeptide. In terms of processing, cleaved by autocatalysis into a large and small subunit.

The protein resides in the secreted. The enzyme catalyses an N-terminal (5-L-glutamyl)-[peptide] + an alpha-amino acid = 5-L-glutamyl amino acid + an N-terminal L-alpha-aminoacyl-[peptide]. The catalysed reaction is glutathione + H2O = L-cysteinylglycine + L-glutamate. It catalyses the reaction an S-substituted glutathione + H2O = an S-substituted L-cysteinylglycine + L-glutamate. It participates in sulfur metabolism; glutathione metabolism. With respect to regulation, inhibited by glucose. Functionally, cleaves the gamma-glutamyl bond of extracellular glutathione (gamma-Glu-Cys-Gly), glutathione conjugates, and other gamma-glutamyl compounds. The metabolism of glutathione releases free glutamate and the dipeptide cysteinyl-glycine, which is hydrolyzed to cysteine and glycine by dipeptidases. Uses glutamine as a gamma-glutamyl donor and acceptor for gamma-polyglutamic acid synthesis. Dipeptides are better gamma-glutamyl acceptors than free amino acids. The sequence is that of Glutathione hydrolase proenzyme (ggt) from Bacillus subtilis subsp. natto.